A 337-amino-acid chain; its full sequence is Vacuolar protein sorting-associated protein 26B (337 aa).

The disordered stretch occupies residues 311–337; that stretch reads SQRFEGTSHPETRPQHSGAAAVEQEQE.

The protein belongs to the VPS26 family. Component of the heterotrimeric retromer cargo-selective complex (CSC) which is believed to associate with variable sorting nexins to form functionally distinct retromer complex variants.

It is found in the cytoplasm. The protein localises to the membrane. Its subcellular location is the endosome. In terms of biological role, acts as a component of the retromer cargo-selective complex (CSC). The CSC is believed to be the core functional component of retromer or respective retromer complex variants acting to prevent missorting of selected transmembrane cargo proteins into the lysosomal degradation pathway. Retromer mediates retrograde transport of cargo proteins from endosomes to the trans-Golgi network (TGN). The protein is Vacuolar protein sorting-associated protein 26B (vps26b) of Xenopus tropicalis (Western clawed frog).